Reading from the N-terminus, the 320-residue chain is Annexin A5 (320 aa).

Residue Ala2 is modified to N-acetylalanine. 4 Annexin repeats span residues Phe15–Lys86, Pro87–Gln158, Ala170–Lys242, and Ser246–Gly317. Residue Lys29 forms a Glycyl lysine isopeptide (Lys-Gly) (interchain with G-Cter in SUMO1); alternate linkage. Residue Lys29 forms a Glycyl lysine isopeptide (Lys-Gly) (interchain with G-Cter in SUMO2); alternate linkage. Ser37 carries the post-translational modification Phosphoserine. Lys70, Lys76, Lys79, Lys97, and Lys101 each carry N6-acetyllysine. Lys290 bears the N6-succinyllysine mark. Positions Leu314–Asp320 match the [IL]-x-C-x-x-[DE] motif motif.

Belongs to the annexin family. In terms of assembly, monomer. Binds ATRX and EIF5B. Post-translationally, S-nitrosylation is induced by interferon-gamma and oxidatively-modified low-densitity lipoprotein (LDL(ox)) possibly implicating the iNOS-S100A8/9 transnitrosylase complex.

Its function is as follows. This protein is an anticoagulant protein that acts as an indirect inhibitor of the thromboplastin-specific complex, which is involved in the blood coagulation cascade. This is Annexin A5 (ANXA5) from Macaca fascicularis (Crab-eating macaque).